We begin with the raw amino-acid sequence, 1083 residues long: Kinesin-like protein KIN-14R (1083 aa).

A coiled-coil region spans residues 264–418 (HDKYEKKIAE…NHIQETKGNI (155 aa)). A Kinesin motor domain is found at 417–739 (NIRVFCRCRP…LNFATRVRGV (323 aa)). 500–507 (GQTGTGKT) is a binding site for ATP. Coiled-coil stretches lie at residues 746–876 (KQVD…SEGS) and 905–947 (IKEL…MATT). The segment at 967-1083 (EDNFGNENME…RDSKKKIWSR (117 aa)) is disordered. Over residues 971–985 (GNENMESNTNILRTS) the composition is skewed to polar residues. The segment covering 1020–1032 (PQMKEKRIRKSDP) has biased composition (basic and acidic residues). Polar residues predominate over residues 1044–1054 (RTASGSSSQVP). Basic and acidic residues predominate over residues 1062 to 1083 (KREQQEVPVVKERDSKKKIWSR).

The protein belongs to the TRAFAC class myosin-kinesin ATPase superfamily. Kinesin family. KIN-14 subfamily.

The chain is Kinesin-like protein KIN-14R from Arabidopsis thaliana (Mouse-ear cress).